Reading from the N-terminus, the 173-residue chain is Probable transcription termination protein NusA (173 aa).

One can recognise a KH domain in the interval D31 to N97. Basic and acidic residues predominate over residues A147–E162. The tract at residues A147–Q173 is disordered. Residues S163 to Q173 are compositionally biased toward polar residues.

It belongs to the NusA family.

The protein localises to the cytoplasm. In terms of biological role, participates in transcription termination. In Methanococcus vannielii (strain ATCC 35089 / DSM 1224 / JCM 13029 / OCM 148 / SB), this protein is Probable transcription termination protein NusA.